The following is a 282-amino-acid chain: Putative phosphatase MPN_383 (282 aa).

The Nucleophile role is filled by Asp11. Asp11 provides a ligand contact to Mg(2+). Leu12 serves as a coordination point for phosphate. Position 13 (Asp13) interacts with Mg(2+). Phosphate contacts are provided by residues 45 to 46 (TG) and Lys207. Asp230 contacts Mg(2+). A phosphate-binding site is contributed by Asn233.

It belongs to the HAD-like hydrolase superfamily. Cof family. The cofactor is Mg(2+).

This chain is Putative phosphatase MPN_383, found in Mycoplasma pneumoniae (strain ATCC 29342 / M129 / Subtype 1) (Mycoplasmoides pneumoniae).